The chain runs to 181 residues: tRNA (cytidine(56)-2'-O)-methyltransferase (181 aa).

Residues leucine 88, 115–119 (GGEKV), and 133–140 (IGNQPHSE) each bind S-adenosyl-L-methionine.

Belongs to the aTrm56 family. In terms of assembly, homodimer.

The protein localises to the cytoplasm. The catalysed reaction is cytidine(56) in tRNA + S-adenosyl-L-methionine = 2'-O-methylcytidine(56) in tRNA + S-adenosyl-L-homocysteine + H(+). Its function is as follows. Specifically catalyzes the AdoMet-dependent 2'-O-ribose methylation of cytidine at position 56 in tRNAs. The polypeptide is tRNA (cytidine(56)-2'-O)-methyltransferase (Thermofilum pendens (strain DSM 2475 / Hrk 5)).